A 1141-amino-acid chain; its full sequence is Translocase of chloroplast 125, chloroplastic (1141 aa).

Disordered stretches follow at residues 1–177 (MDAL…ISGY) and 325–431 (GFVE…EANE). 2 stretches are compositionally biased toward basic and acidic residues: residues 57–72 (RVPEDVRSESEVKRDG) and 107–121 (IDGRFQFEDGVREDL). The segment covering 132 to 150 (YDDDDDDEEEEEDGSEEGE) has biased composition (acidic residues). Low complexity predominate over residues 151-167 (STSSSIINSEYSSSASN). Residues 328-353 (EAEEAESDVFTEGEDGYDDEDEDGDI) show a composition bias toward acidic residues. Low complexity-rich tracts occupy residues 389-401 (RSSARRSAATTAT) and 408-429 (TASSTQSAATSDASISSESSEA). One can recognise an AIG1-type G domain in the interval 505–734 (DFACTILVLG…KLQEASTPGK (230 aa)). Positions 514–521 (GKTGVGKS) are G1. 517–522 (GVGKSA) provides a ligand contact to GTP. A Mg(2+)-binding site is contributed by S521. The G2 stretch occupies residues 541–545 (STTKV). The segment at 561–564 (DTPG) is G3. Residues 633–636 (THAS) form a G4 region. GTP is bound by residues H634 and 682 to 683 (EN). The interval 682–684 (ENH) is G5. Disordered regions lie at residues 758–795 (QLKMPDEQHGESEDSDDDSDEEDEEEGDEYDDLPPFRP) and 832–871 (IRRRRERKKQASVMSKEEPSIPGDGAEDESGQPATVAVPM). Residues 770–789 (EDSDDDSDEEDEEEGDEYDD) are compositionally biased toward acidic residues. Over residues 832–841 (IRRRRERKKQ) the composition is skewed to basic residues. Residues 1116–1136 (MVLIGIVPILRSLINCRFGFG) form a helical membrane-spanning segment.

Belongs to the TRAFAC class TrmE-Era-EngA-EngB-Septin-like GTPase superfamily. AIG1/Toc34/Toc159-like paraseptin GTPase family. TOC159 subfamily. Part of the TOC core complex. The cofactor is Mg(2+).

The protein resides in the plastid. Its subcellular location is the chloroplast outer membrane. Functionally, GTPase involved in protein precursor import into chloroplasts. Seems to recognize chloroplast-destined precursor proteins and regulate their presentation to the translocation channel through GTP hydrolysis. Probably specialized in the import of nuclear encoded non-photosynthetic preproteins from the cytoplasm to the chloroplast. In Physcomitrium patens (Spreading-leaved earth moss), this protein is Translocase of chloroplast 125, chloroplastic.